The sequence spans 288 residues: Thymidylate synthase (288 aa).

Position 21 (arginine 21) interacts with dUMP. Asparagine 51 provides a ligand contact to (6R)-5,10-methylene-5,6,7,8-tetrahydrofolate. Residue 150-151 coordinates dUMP; that stretch reads RR. The active-site Nucleophile is the cysteine 170. DUMP is bound by residues 190 to 193, asparagine 201, and 231 to 233; these read RSGD and HIY. Aspartate 193 lines the (6R)-5,10-methylene-5,6,7,8-tetrahydrofolate pocket. Alanine 287 contacts (6R)-5,10-methylene-5,6,7,8-tetrahydrofolate.

It belongs to the thymidylate synthase family. Bacterial-type ThyA subfamily. In terms of assembly, homodimer.

The protein resides in the cytoplasm. It carries out the reaction dUMP + (6R)-5,10-methylene-5,6,7,8-tetrahydrofolate = 7,8-dihydrofolate + dTMP. It functions in the pathway pyrimidine metabolism; dTTP biosynthesis. In terms of biological role, catalyzes the reductive methylation of 2'-deoxyuridine-5'-monophosphate (dUMP) to 2'-deoxythymidine-5'-monophosphate (dTMP) while utilizing 5,10-methylenetetrahydrofolate (mTHF) as the methyl donor and reductant in the reaction, yielding dihydrofolate (DHF) as a by-product. This enzymatic reaction provides an intracellular de novo source of dTMP, an essential precursor for DNA biosynthesis. In Aster yellows witches'-broom phytoplasma (strain AYWB), this protein is Thymidylate synthase.